A 446-amino-acid polypeptide reads, in one-letter code: MSRKYFGTDGIRGRVGQFPITPDFMLKLGWAAGMAFRKQGHCRVLVGKDTRISGYMFESALEAGLSAAGADVMLLGPMPTPAIAYLTRTFHAEAGIVISASHNPHDDNGIKFFSGSGTKLPDEVELMIEELLDQPMTVVESGKLGKVSRINDAAGRYIEFCKSSVPSSTNFEGLKIVVDCAHGATYKVAPSVFRELGAEVTVLHASPDGLNINENCGSTHIESLQAAVLVGHADLGIAFDGDGDRVLMVDHTGAIVDGDELLYIIGRDLHDRNKLQGGVVGTLMSNLGLELAFKELDIPFVRAKVGDRYVMAELLEREWLLGGENSGHVVCCNHTTTGDAIIAALQVLMALKRKGETLAQARQGVRKCPQVLINVRFEAGKSDPLQNPLVKEASDKATEAMAGRGRVLLRKSGTEPLVRVMVEGDDENQVRGHAEALAKLVAEVCA.

Serine 101 serves as the catalytic Phosphoserine intermediate. Mg(2+)-binding residues include serine 101, aspartate 240, aspartate 242, and aspartate 244. Residue serine 101 is modified to Phosphoserine.

The protein belongs to the phosphohexose mutase family. Mg(2+) is required as a cofactor. Activated by phosphorylation.

The catalysed reaction is alpha-D-glucosamine 1-phosphate = D-glucosamine 6-phosphate. Its function is as follows. Catalyzes the conversion of glucosamine-6-phosphate to glucosamine-1-phosphate. This chain is Phosphoglucosamine mutase, found in Pseudomonas entomophila (strain L48).